The primary structure comprises 966 residues: Aminopeptidase N (966 aa).

Over 1-8 the chain is Cytoplasmic; it reads MAKGFYIS. A helical; Signal-anchor for type II membrane protein transmembrane segment spans residues 9-32; sequence KTLGILGILLGVAAVCTIIALSVV. The segment at 33–68 is cytosolic Ser/Thr-rich junction; the sequence is YAQEKNRNAENSATAPTLPGSTSATTATTTPAVDES. Topologically, residues 33–966 are extracellular; sequence YAQEKNRNAE…VFKWFTENSS (934 aa). Residues 42–64 form a disordered region; it reads ENSATAPTLPGSTSATTATTTPA. Residues 44 to 64 are compositionally biased toward low complexity; sequence SATAPTLPGSTSATTATTTPA. The segment at 69–966 is metalloprotease; sequence KPWNQYRLPK…VFKWFTENSS (898 aa). N-linked (GlcNAc...) asparagine glycans are attached at residues asparagine 106, asparagine 114, and asparagine 128. Tyrosine 176 is subject to Sulfotyrosine. N-linked (GlcNAc...) asparagine glycans are attached at residues asparagine 234, asparagine 288, asparagine 318, and asparagine 332. Residue 351–355 coordinates substrate; it reads GAMEN. Residue histidine 387 participates in Zn(2+) binding. Glutamate 388 acts as the Proton acceptor in catalysis. Residues histidine 391 and glutamate 410 each contribute to the Zn(2+) site. Tyrosine 418 and tyrosine 423 each carry sulfotyrosine. N-linked (GlcNAc...) asparagine glycans are attached at residues asparagine 573, asparagine 606, asparagine 624, and asparagine 734. A disulfide bridge connects residues cysteine 760 and cysteine 767. Asparagine 784 and asparagine 817 each carry an N-linked (GlcNAc...) asparagine glycan. A disulfide bond links cysteine 797 and cysteine 833. A Phosphotyrosine modification is found at tyrosine 852.

The protein belongs to the peptidase M1 family. In terms of assembly, homodimer. Interacts with SLC6A19. The cofactor is Zn(2+). Post-translationally, N- and O-glycosylated. In terms of processing, sulfated. May undergo proteolysis and give rise to a soluble form. Expressed in the intestinal brush border (at protein level). Highly expressed in intestinal tract and kidney, present in liver, lymph node, spleen, and brain. Found as well in monocytes, macrophages, dendritic cells, veiled cells and B-cells but not on T-cells and thymocytes.

The protein localises to the cell membrane. It catalyses the reaction Release of an N-terminal amino acid, Xaa-|-Yaa- from a peptide, amide or arylamide. Xaa is preferably Ala, but may be most amino acids including Pro (slow action). When a terminal hydrophobic residue is followed by a prolyl residue, the two may be released as an intact Xaa-Pro dipeptide.. In terms of biological role, broad specificity aminopeptidase which plays a role in the final digestion of peptides generated from hydrolysis of proteins by gastric and pancreatic proteases. Also involved in the processing of various peptides including peptide hormones, such as angiotensin III and IV, neuropeptides, and chemokines. May also be involved the cleavage of peptides bound to major histocompatibility complex class II molecules of antigen presenting cells. May have a role in angiogenesis and promote cholesterol crystallization. May have a role in amino acid transport by acting as binding partner of amino acid transporter SLC6A19 and regulating its activity. This is Aminopeptidase N (Anpep) from Mus musculus (Mouse).